Reading from the N-terminus, the 186-residue chain is CASP-like protein ARALYDRAFT_316979 (186 aa).

Residues 1–23 (MRRNGDGEEVVAKRRRRIKELVQ) lie on the Cytoplasmic side of the membrane. Residues 24–44 (VALRGGCLAASATAMAVMLTA) form a helical membrane-spanning segment. Residues 45 to 70 (TEEGVADIYGFKLTLSSNWSFSPSYQ) lie on the Extracellular side of the membrane. Residue N62 is glycosylated (N-linked (GlcNAc...) asparagine). A helical membrane pass occupies residues 71-91 (YVVGACTGTVLYSLFQLCLGV). The Cytoplasmic portion of the chain corresponds to 92–115 (YRLLTGSPITPSRFQAWLCFTSDQ). Residues 116 to 132 (LFGYLMMSAGSAGSGVT) traverse the membrane as a helical segment. The Extracellular portion of the chain corresponds to 133-161 (NLNKTGIRHTPLPDFCKTLSSFCNHVALS). N135 is a glycosylation site (N-linked (GlcNAc...) asparagine). Residues 162-182 (LLLVFLSFIFLASSSFFTVLV) traverse the membrane as a helical segment. The Cytoplasmic portion of the chain corresponds to 183–186 (LSTP).

It belongs to the Casparian strip membrane proteins (CASP) family. In terms of assembly, homodimer and heterodimers.

The protein localises to the cell membrane. The chain is CASP-like protein ARALYDRAFT_316979 from Arabidopsis lyrata subsp. lyrata (Lyre-leaved rock-cress).